Consider the following 270-residue polypeptide: Shikimate dehydrogenase (NADP(+)) (270 aa).

Residues 15–17 (SKS) and threonine 62 each bind shikimate. Catalysis depends on lysine 66, which acts as the Proton acceptor. Residues asparagine 87 and aspartate 102 each contribute to the shikimate site. Residues 127 to 131 (GAGGA), 151 to 156 (NRTVAR), and methionine 214 contribute to the NADP(+) site. Position 216 (tyrosine 216) interacts with shikimate. Glycine 238 serves as a coordination point for NADP(+).

This sequence belongs to the shikimate dehydrogenase family. As to quaternary structure, homodimer.

It carries out the reaction shikimate + NADP(+) = 3-dehydroshikimate + NADPH + H(+). The protein operates within metabolic intermediate biosynthesis; chorismate biosynthesis; chorismate from D-erythrose 4-phosphate and phosphoenolpyruvate: step 4/7. Its function is as follows. Involved in the biosynthesis of the chorismate, which leads to the biosynthesis of aromatic amino acids. Catalyzes the reversible NADPH linked reduction of 3-dehydroshikimate (DHSA) to yield shikimate (SA). The polypeptide is Shikimate dehydrogenase (NADP(+)) (Alkalilimnicola ehrlichii (strain ATCC BAA-1101 / DSM 17681 / MLHE-1)).